A 231-amino-acid polypeptide reads, in one-letter code: Pathogenesis-related thaumatin-like protein 3.7 (231 aa).

The N-terminal stretch at 1–27 is a signal peptide; that stretch reads MATVSDLALLLVAGLVAISLHMQEAGA. Disulfide bonds link Cys-36–Cys-230, Cys-77–Cys-87, Cys-92–Cys-98, Cys-143–Cys-218, Cys-148–Cys-201, Cys-156–Cys-166, Cys-170–Cys-179, and Cys-180–Cys-188.

The protein belongs to the thaumatin family.

In terms of biological role, may be involved in disease resistance. The polypeptide is Pathogenesis-related thaumatin-like protein 3.7 (Cryptomeria japonica (Japanese cedar)).